A 382-amino-acid chain; its full sequence is Anhydro-N-acetylmuramic acid kinase (382 aa).

22–29 (GTSMDGVD) contributes to the ATP binding site.

It belongs to the anhydro-N-acetylmuramic acid kinase family.

It catalyses the reaction 1,6-anhydro-N-acetyl-beta-muramate + ATP + H2O = N-acetyl-D-muramate 6-phosphate + ADP + H(+). The protein operates within amino-sugar metabolism; 1,6-anhydro-N-acetylmuramate degradation. It functions in the pathway cell wall biogenesis; peptidoglycan recycling. In terms of biological role, catalyzes the specific phosphorylation of 1,6-anhydro-N-acetylmuramic acid (anhMurNAc) with the simultaneous cleavage of the 1,6-anhydro ring, generating MurNAc-6-P. Is required for the utilization of anhMurNAc either imported from the medium or derived from its own cell wall murein, and thus plays a role in cell wall recycling. This is Anhydro-N-acetylmuramic acid kinase from Burkholderia orbicola (strain AU 1054).